The sequence spans 369 residues: Phospho-N-acetylmuramoyl-pentapeptide-transferase (369 aa).

A run of 10 helical transmembrane segments spans residues 30–50 (AAAI…IGYL), 73–93 (LPTM…LLWA), 99–119 (YVWL…IDDY), 140–160 (VSLG…SVLL), 171–191 (LMID…TAVS), 202–222 (GLAA…AYLT), 239–259 (GGEV…FLWF), 266–286 (IFMG…IALL), 291–311 (LLLP…SLQV), and 346–366 (KIVI…LMTL).

This sequence belongs to the glycosyltransferase 4 family. MraY subfamily. It depends on Mg(2+) as a cofactor.

The protein resides in the cell inner membrane. It carries out the reaction UDP-N-acetyl-alpha-D-muramoyl-L-alanyl-gamma-D-glutamyl-meso-2,6-diaminopimeloyl-D-alanyl-D-alanine + di-trans,octa-cis-undecaprenyl phosphate = di-trans,octa-cis-undecaprenyl diphospho-N-acetyl-alpha-D-muramoyl-L-alanyl-D-glutamyl-meso-2,6-diaminopimeloyl-D-alanyl-D-alanine + UMP. The protein operates within cell wall biogenesis; peptidoglycan biosynthesis. In terms of biological role, catalyzes the initial step of the lipid cycle reactions in the biosynthesis of the cell wall peptidoglycan: transfers peptidoglycan precursor phospho-MurNAc-pentapeptide from UDP-MurNAc-pentapeptide onto the lipid carrier undecaprenyl phosphate, yielding undecaprenyl-pyrophosphoryl-MurNAc-pentapeptide, known as lipid I. This is Phospho-N-acetylmuramoyl-pentapeptide-transferase from Chlorobium phaeobacteroides (strain BS1).